We begin with the raw amino-acid sequence, 1586 residues long: COP1-interactive protein 1 (1586 aa).

In terms of domain architecture, NAB spans 10–84 (LKSFFEPHFD…RQYDDLTGEI (75 aa)). Residues 88 to 119 (VNGKGESSSSSSSDSDSDHSSKRKVKRNGNGK) form a disordered region. Coiled coils occupy residues 128–411 (TGAL…LKES), 437–1196 (ASEL…LKEE), 1225–1336 (LETL…TEAT), and 1372–1406 (MESL…SNQK). LRR repeat units follow at residues 173 to 187 (SEEI…TEKL), 188 to 210 (EDEK…VAGK), 216 to 239 (NQKL…GIKR), 261 to 285 (TSNL…MNSA), and 287 to 309 (EENK…GQTT). The segment covering 249–262 (DWKTTSDQLKDETS) has biased composition (basic and acidic residues). The segment at 249-286 (DWKTTSDQLKDETSNLKQQLEASEQRVSELTSGMNSAE) is disordered. Positions 325–353 (KEKESEHSSLVELHKTHERESSSQVKELE) are disordered. LRR repeat units lie at residues 384-410 (IAEL…QLKE), 437-461 (ASEL…LKAA), 473-498 (VETM…KLKD), 560-586 (IAEL…QLKE), 613-637 (VSEL…LKDA), 649-674 (LEIM…ELKD), 768-792 (LSEL…LNAA), 824-850 (LAES…AHKR), 856-880 (VKEL…LNSS), 902-929 (ESTI…LFSL), 944-968 (LRGL…LKAA), 990-1014 (QIMV…ESKL), 1077-1101 (ISEL…LEDN), 1120-1144 (RAEL…SEEA), 1195-1220 (EEII…KIKG), 1247-1272 (VQMH…NLKN), 1372-1396 (MESL…ISNI), 1398-1417 (VKLR…LTEK), 1426-1448 (AKHL…TYRG), and 1450-1474 (IKEI…LTEK). The segment at 430–456 (QRDSSTRASELEAQLESSKQQVSDLSA) is disordered. Positions 444-455 (LESSKQQVSDLS) are enriched in polar residues. A disordered region spans residues 965–985 (LKAAEEESRTMSTKISETSDE). Residues 1496–1530 (VIERNHEKEKMNKEIEKKDEEIKKLGGKVREDEKE) adopt a coiled-coil conformation.

Interacts with COP1 coiled-coil region. As to expression, mainly expressed in photosynthetic and vascular tissues. Accumulates in both dark-grown and light-grown seedlings roots and shoots, leaves and flowers (at protein level).

The protein resides in the cell membrane. It is found in the cytoplasm. It localises to the cytoskeleton. Positive regulator of abscisic acid (ABA)-mediated signaling pathways involved in abiotic stress responses (e.g. osmotic stress) and leading to various plant adaptation (e.g. stomata closure). The sequence is that of COP1-interactive protein 1 from Arabidopsis thaliana (Mouse-ear cress).